The following is a 490-amino-acid chain: ATP synthase subunit beta, chloroplastic (490 aa).

Residue 170-177 (GGAGVGKT) participates in ATP binding.

This sequence belongs to the ATPase alpha/beta chains family. F-type ATPases have 2 components, CF(1) - the catalytic core - and CF(0) - the membrane proton channel. CF(1) has five subunits: alpha(3), beta(3), gamma(1), delta(1), epsilon(1). CF(0) has four main subunits: a(1), b(1), b'(1) and c(9-12).

The protein resides in the plastid. The protein localises to the chloroplast thylakoid membrane. The catalysed reaction is ATP + H2O + 4 H(+)(in) = ADP + phosphate + 5 H(+)(out). Its function is as follows. Produces ATP from ADP in the presence of a proton gradient across the membrane. The catalytic sites are hosted primarily by the beta subunits. The chain is ATP synthase subunit beta, chloroplastic from Ipomoea setosa (Brazilian morning glory).